Here is a 357-residue protein sequence, read N- to C-terminus: Protein-glutamate methylesterase/protein-glutamine glutaminase (357 aa).

The region spanning 3–120 (RVLVVDDSAF…SIDLYKVRDM (118 aa)) is the Response regulatory domain. The residue at position 54 (Asp-54) is a 4-aspartylphosphate. The region spanning 161–355 (FRAGKQLICI…AAIMTYMKKE (195 aa)) is the CheB-type methylesterase domain. Active-site residues include Ser-173, His-200, and Asp-296.

It belongs to the CheB family. Post-translationally, phosphorylated by CheA. Phosphorylation of the N-terminal regulatory domain activates the methylesterase activity.

It is found in the cytoplasm. The catalysed reaction is [protein]-L-glutamate 5-O-methyl ester + H2O = L-glutamyl-[protein] + methanol + H(+). The enzyme catalyses L-glutaminyl-[protein] + H2O = L-glutamyl-[protein] + NH4(+). Involved in chemotaxis. Part of a chemotaxis signal transduction system that modulates chemotaxis in response to various stimuli. Catalyzes the demethylation of specific methylglutamate residues introduced into the chemoreceptors (methyl-accepting chemotaxis proteins or MCP) by CheR. Also mediates the irreversible deamidation of specific glutamine residues to glutamic acid. This Bacillus licheniformis (strain ATCC 14580 / DSM 13 / JCM 2505 / CCUG 7422 / NBRC 12200 / NCIMB 9375 / NCTC 10341 / NRRL NRS-1264 / Gibson 46) protein is Protein-glutamate methylesterase/protein-glutamine glutaminase.